Reading from the N-terminus, the 944-residue chain is Calcium-transporting ATPase type 2C member 2 (944 aa).

Topologically, residues 1–104 (MGRRLKFLQK…DNAEPVWKKY (104 aa)) are cytoplasmic. Residues 69–93 (VDLDSGLSEFAVAQRRLVHGWNEFV) are interaction with ORAI1. The helical transmembrane segment at 105–125 (LDQFRNPLILLLLGSSVVSVL) threads the bilayer. Residues 126–127 (TK) lie on the Extracellular side of the membrane. Residues 128–148 (EYEDAVSIALAVLIVVTVGFI) form a helical membrane-spanning segment. Topologically, residues 149-229 (QEYRSEKSLE…EVEPCGKTDS (81 aa)) are cytoplasmic. The helical transmembrane segment at 230–250 (PLADGGDLSTLSNVVFMGTLV) threads the bilayer. At 251 to 291 (QCGKGQGVVIGTGEQSQFGEVFKMMRAEETPKTPLQKSMDK) the chain is on the extracellular side. Phosphothreonine is present on T262. A Phosphoserine modification is found at S266. The helical transmembrane segment at 292–312 (LGKQLTIFSFGIIGLLMLVGW) threads the bilayer. The Cytoplasmic segment spans residues 313-329 (VQGKPFLSMFTVGVSLA). Ca(2+) contacts are provided by V330, A331, I333, and E335. Residues 330–350 (VAAIPEGLPIVVMVTLVLGVL) traverse the membrane as a helical segment. Residues 351–748 (RMAKKRVIVK…IAALSLITLS (398 aa)) lie on the Extracellular side of the membrane. D377 acts as the 4-aspartylphosphate intermediate in catalysis. Residues D672 and D676 each contribute to the Mg(2+) site. The helical transmembrane segment at 749–769 (TVCNLPSPLNAMQILWVNIIM) threads the bilayer. Residues N766 and D770 each coordinate Ca(2+). Topologically, residues 770-802 (DGPPAQSLGVEPVDRDALRRPPRSVGDTILNRA) are cytoplasmic. The chain crosses the membrane as a helical span at residues 803–823 (LILRVLMSAAVIIGGTLFIFW). Residues 824 to 835 (REIPANGTSTPR) lie on the Extracellular side of the membrane. A helical membrane pass occupies residues 836–853 (TTTMAFTCFVFFDLFNAL). Over 854–872 (SCRSQTKLIFEIGFFRNRM) the chain is Cytoplasmic. A helical membrane pass occupies residues 873–893 (FLYSVLGSLLGQLAVIYAPPL). Over 894 to 903 (QKVFQTENLS) the chain is Extracellular. Residues 904–924 (ALDLLLLTGLASSVFILSELL) form a helical membrane-spanning segment. Over 925-944 (KLWEKFLSRARPTQMLPEAV) the chain is Cytoplasmic.

It belongs to the cation transport ATPase (P-type) (TC 3.A.3) family. Type IIA subfamily. As to quaternary structure, interacts (via N-terminus) with ORAI1 (via N- and C-termini); this interaction regulates Ca(2+) influx at the plasma membrane. In terms of tissue distribution, expressed in hippocampal neurons (at protein level). Expressed in lactating mammary epithelium (at protein level).

It is found in the golgi apparatus. Its subcellular location is the trans-Golgi network membrane. It localises to the cell membrane. The protein localises to the basolateral cell membrane. It catalyses the reaction Ca(2+)(in) + ATP + H2O = Ca(2+)(out) + ADP + phosphate + H(+). The enzyme catalyses Mn(2+)(in) + ATP + H2O = Mn(2+)(out) + ADP + phosphate + H(+). Its function is as follows. ATP-driven pump that supplies the Golgi apparatus with Ca(2+) and Mn(2+) ions, both essential cofactors for processing and trafficking of newly synthesized proteins in the secretory pathway. Within a catalytic cycle, acquires Ca(2+) or Mn(2+) ions on the cytoplasmic side of the membrane and delivers them to the lumenal side. The transfer of ions across the membrane is coupled to ATP hydrolysis and is associated with a transient phosphorylation that shifts the pump conformation from inward-facing to outward-facing state. Induces Ca(2+) influx independently of its ATP-driven pump function. At the basolateral membrane of mammary epithelial cells, interacts with Ca(2+) channel ORAI1 and mediates Ca(2+) entry independently of the Ca(2+) content of endoplasmic reticulum or Golgi stores. May facilitate transepithelial transport of large quantities of Ca(2+) for milk secretion via activation of Ca(2+) influx channels at the plasma membrane and active Ca(2+) transport at the Golgi apparatus. The chain is Calcium-transporting ATPase type 2C member 2 from Mus musculus (Mouse).